The primary structure comprises 123 residues: Holo-[acyl-carrier-protein] synthase (123 aa).

Residues D8 and E60 each contribute to the Mg(2+) site.

This sequence belongs to the P-Pant transferase superfamily. AcpS family. The cofactor is Mg(2+).

Its subcellular location is the cytoplasm. It catalyses the reaction apo-[ACP] + CoA = holo-[ACP] + adenosine 3',5'-bisphosphate + H(+). In terms of biological role, transfers the 4'-phosphopantetheine moiety from coenzyme A to a Ser of acyl-carrier-protein. The polypeptide is Holo-[acyl-carrier-protein] synthase (Ehrlichia chaffeensis (strain ATCC CRL-10679 / Arkansas)).